Consider the following 471-residue polypeptide: Alpha-galactosidase 2 (471 aa).

Positions 1–18 are cleaved as a signal peptide; it reads MFAFYFLTACISLKGVFG. A disulfide bridge links C42 with C74. 2 residues coordinate substrate: D72 and D73. N-linked (GlcNAc...) asparagine glycosylation is present at N105. Cysteines 121 and 151 form a disulfide. K147 contacts substrate. D149 serves as the catalytic Nucleophile. An N-linked (GlcNAc...) asparagine glycan is attached at N175. R205 serves as a coordination point for substrate. The active-site Proton donor is the D209. 2 disulfide bridges follow: C221-C237 and C223-C230. Q251 provides a ligand contact to substrate. Residues N270, N370, N403, N413, N422, N435, and N454 are each glycosylated (N-linked (GlcNAc...) asparagine).

Belongs to the glycosyl hydrolase 27 family. In terms of assembly, homotetramer.

The protein resides in the secreted. The enzyme catalyses Hydrolysis of terminal, non-reducing alpha-D-galactose residues in alpha-D-galactosides, including galactose oligosaccharides, galactomannans and galactolipids.. The chain is Alpha-galactosidase 2 (MEL2) from Saccharomyces cerevisiae (Baker's yeast).